We begin with the raw amino-acid sequence, 92 residues long: Large ribosomal subunit protein eL43y (92 aa).

The C4-type zinc finger occupies 39 to 60; that stretch reads CEFCGKYGVKRKAVGIWGCKDC.

This sequence belongs to the eukaryotic ribosomal protein eL43 family.

The polypeptide is Large ribosomal subunit protein eL43y (RPL37AC) (Arabidopsis thaliana (Mouse-ear cress)).